A 350-amino-acid polypeptide reads, in one-letter code: Phenylalanine--tRNA ligase alpha subunit (350 aa).

E257 provides a ligand contact to Mg(2+).

This sequence belongs to the class-II aminoacyl-tRNA synthetase family. Phe-tRNA synthetase alpha subunit type 1 subfamily. In terms of assembly, tetramer of two alpha and two beta subunits. Requires Mg(2+) as cofactor.

It is found in the cytoplasm. The enzyme catalyses tRNA(Phe) + L-phenylalanine + ATP = L-phenylalanyl-tRNA(Phe) + AMP + diphosphate + H(+). The protein is Phenylalanine--tRNA ligase alpha subunit of Listeria welshimeri serovar 6b (strain ATCC 35897 / DSM 20650 / CCUG 15529 / CIP 8149 / NCTC 11857 / SLCC 5334 / V8).